Reading from the N-terminus, the 148-residue chain is 3-dehydroquinate dehydratase (148 aa).

Tyr-24 functions as the Proton acceptor in the catalytic mechanism. Residues Asn-75, His-81, and Asp-88 each coordinate substrate. Catalysis depends on His-101, which acts as the Proton donor. Substrate contacts are provided by residues 102-103 (LS) and Arg-112.

Belongs to the type-II 3-dehydroquinase family. In terms of assembly, homododecamer.

It carries out the reaction 3-dehydroquinate = 3-dehydroshikimate + H2O. It participates in metabolic intermediate biosynthesis; chorismate biosynthesis; chorismate from D-erythrose 4-phosphate and phosphoenolpyruvate: step 3/7. Catalyzes a trans-dehydration via an enolate intermediate. The sequence is that of 3-dehydroquinate dehydratase from Rhizobium meliloti (strain 1021) (Ensifer meliloti).